The following is a 648-amino-acid chain: MEVKGKKQFTGKSTKTAQEKNRFHKNSDSGSSKTFPTRKVAKEGGPKVTSRNFEKSITKLGKKGVKQFKNKQQGDKSPKNKFQPANKFNKKRKFQPDGRSDESAAKKPKWDDFKKKKKELKQSRQLSDKTNYDIVVRAKQMWEILRRKDCDKEKRVKLMSDLQKLIQGKIKTIAFAHDSTRVIQCYIQYGNEEQRKQAFEELRDDLVELSKAKYSRNIVKKFLMYGSKPQIAEIIRSFKGHVRKMLRHAEASAIVEYAYNDKAILEQRNMLTEELYGNTFQLYKSADHRTLDKVLEVQPEKLELIMDEMKQILTPMAQKEAVIKHSLVHKVFLDFFTYAPPKLRSEMIEAIREAVVYLAHTHDGARVAMHCLWHGTPKDRKVIVKTMKTYVEKVANGQYSHLVLLAAFDCIDDTKLVKQIIISEIISSLPSIVNDKYGRKVLLYLLSPRDPAHTVREIIEVLQKGDGNAHSKKDTEVRRRELLESISPALLSYLQEHAQEVVLDKSACVLVSDILGSATGDVQPTMNAIASLAATGLHPGGKDGELHIAEHPAGHLVLKWLIEQDKKMKENGREGCFAKTLVEHVGMKNLKSWASVNRGAIILSSLLQSCDLEVANKVKAALKSLIPTLEKTKSTSKGIEILLEKLST.

The disordered stretch occupies residues 1–124 (MEVKGKKQFT…KKKKELKQSR (124 aa)). The segment covering 17–27 (AQEKNRFHKNS) has biased composition (basic and acidic residues). Lys33 is modified (N6-acetyllysine). Residues 60 to 69 (LGKKGVKQFK) are compositionally biased toward basic residues. Residues 94–124 (FQPDGRSDESAAKKPKWDDFKKKKKELKQSR) are compositionally biased toward basic and acidic residues. The Nuclear localization signal signature appears at 106–118 (KKPKWDDFKKKKK). Positions 143–510 (EILRRKDCDK…VVLDKSACVL (368 aa)) constitute a PUM-HD domain. Pumilio repeat units follow at residues 177-212 (HDST…LSKA), 213-248 (KYSR…MLRH), 249-277 (AEAS…ELYG), 289-325 (RTLD…VIKH), 326-361 (SLVH…LAHT), 362-397 (HDGA…VANG), 398-435 (QYSH…IVND), 436-504 (KYGR…VVLD), 505-551 (KSAC…IAEH), 552-596 (PAGH…WASV), and 597-636 (NRGA…KSTS). The segment at 289–297 (RTLDKVLEV) is HA-8.

Interacts with PARP1 (via catalytic domain). In terms of tissue distribution, widely expressed.

Its subcellular location is the nucleus. The protein resides in the nucleolus. It localises to the nucleoplasm. It is found in the chromosome. Functionally, inhibits the poly(ADP-ribosyl)ation activity of PARP1 and the degradation of PARP1 by CASP3 following genotoxic stress. Binds to double-stranded RNA or DNA without sequence specificity. Involved in development of the eye and of primordial germ cells. The chain is Pumilio homolog 3 from Homo sapiens (Human).